The sequence spans 250 residues: Ubiquinone/menaquinone biosynthesis C-methyltransferase UbiE (250 aa).

S-adenosyl-L-methionine-binding positions include S73, D94, and 122–123 (NA).

The protein belongs to the class I-like SAM-binding methyltransferase superfamily. MenG/UbiE family.

It catalyses the reaction a 2-demethylmenaquinol + S-adenosyl-L-methionine = a menaquinol + S-adenosyl-L-homocysteine + H(+). The catalysed reaction is a 2-methoxy-6-(all-trans-polyprenyl)benzene-1,4-diol + S-adenosyl-L-methionine = a 5-methoxy-2-methyl-3-(all-trans-polyprenyl)benzene-1,4-diol + S-adenosyl-L-homocysteine + H(+). It participates in quinol/quinone metabolism; menaquinone biosynthesis; menaquinol from 1,4-dihydroxy-2-naphthoate: step 2/2. The protein operates within cofactor biosynthesis; ubiquinone biosynthesis. Methyltransferase required for the conversion of demethylmenaquinol (DMKH2) to menaquinol (MKH2) and the conversion of 2-polyprenyl-6-methoxy-1,4-benzoquinol (DDMQH2) to 2-polyprenyl-3-methyl-6-methoxy-1,4-benzoquinol (DMQH2). In Legionella pneumophila (strain Lens), this protein is Ubiquinone/menaquinone biosynthesis C-methyltransferase UbiE.